The chain runs to 83 residues: Cytochrome c oxidase subunit 7A2, mitochondrial (83 aa).

The N-terminal 23 residues, 1 to 23, are a transit peptide targeting the mitochondrion; the sequence is MLRNVLALRQIAQRTISTTSRRH. Over 24–48 the chain is Mitochondrial matrix; it reads FENKVPEKQKLFQEDNGMPVHLKGG. An N6-acetyllysine modification is found at Lys33. The helical transmembrane segment at 49 to 77 threads the bilayer; it reads TSDALLYRATMLLTVGGTAYAIYMLAMAA. Residues 78 to 83 are Mitochondrial intermembrane-facing; that stretch reads FPKKQN.

This sequence belongs to the cytochrome c oxidase VIIa family. In terms of assembly, component of the cytochrome c oxidase (complex IV, CIV), a multisubunit enzyme composed of 14 subunits. The complex is composed of a catalytic core of 3 subunits MT-CO1, MT-CO2 and MT-CO3, encoded in the mitochondrial DNA, and 11 supernumerary subunits COX4I, COX5A, COX5B, COX6A, COX6B, COX6C, COX7A, COX7B, COX7C, COX8 and NDUFA4, which are encoded in the nuclear genome. The complex exists as a monomer or a dimer and forms supercomplexes (SCs) in the inner mitochondrial membrane with NADH-ubiquinone oxidoreductase (complex I, CI) and ubiquinol-cytochrome c oxidoreductase (cytochrome b-c1 complex, complex III, CIII), resulting in different assemblies (supercomplex SCI(1)III(2)IV(1) and megacomplex MCI(2)III(2)IV(2)). Interacts with PET100.

It localises to the mitochondrion inner membrane. The protein operates within energy metabolism; oxidative phosphorylation. Component of the cytochrome c oxidase, the last enzyme in the mitochondrial electron transport chain which drives oxidative phosphorylation. The respiratory chain contains 3 multisubunit complexes succinate dehydrogenase (complex II, CII), ubiquinol-cytochrome c oxidoreductase (cytochrome b-c1 complex, complex III, CIII) and cytochrome c oxidase (complex IV, CIV), that cooperate to transfer electrons derived from NADH and succinate to molecular oxygen, creating an electrochemical gradient over the inner membrane that drives transmembrane transport and the ATP synthase. Cytochrome c oxidase is the component of the respiratory chain that catalyzes the reduction of oxygen to water. Electrons originating from reduced cytochrome c in the intermembrane space (IMS) are transferred via the dinuclear copper A center (CU(A)) of subunit 2 and heme A of subunit 1 to the active site in subunit 1, a binuclear center (BNC) formed by heme A3 and copper B (CU(B)). The BNC reduces molecular oxygen to 2 water molecules using 4 electrons from cytochrome c in the IMS and 4 protons from the mitochondrial matrix. The sequence is that of Cytochrome c oxidase subunit 7A2, mitochondrial (Cox7a2) from Rattus norvegicus (Rat).